Consider the following 311-residue polypeptide: Ribonuclease HIII (311 aa).

Residues 95 to 311 enclose the RNase H type-2 domain; that stretch reads MSIVGSDEVG…NTEKAFRLLK (217 aa). A divalent metal cation-binding residues include Asp-101, Glu-102, and Asp-206.

This sequence belongs to the RNase HII family. RnhC subfamily. The cofactor is Mn(2+). Mg(2+) is required as a cofactor.

Its subcellular location is the cytoplasm. The enzyme catalyses Endonucleolytic cleavage to 5'-phosphomonoester.. Functionally, endonuclease that specifically degrades the RNA of RNA-DNA hybrids. The chain is Ribonuclease HIII from Bacillus cereus (strain ATCC 10987 / NRS 248).